The chain runs to 77 residues: RNA-binding protein Hfq (77 aa).

Positions 9 to 69 constitute a Sm domain; the sequence is DQFLNQLRKE…ISTFAPQKNV (61 aa).

It belongs to the Hfq family. As to quaternary structure, homohexamer.

Its function is as follows. RNA chaperone that binds small regulatory RNA (sRNAs) and mRNAs to facilitate mRNA translational regulation in response to envelope stress, environmental stress and changes in metabolite concentrations. Also binds with high specificity to tRNAs. This is RNA-binding protein Hfq from Shouchella clausii (strain KSM-K16) (Alkalihalobacillus clausii).